The following is a 277-amino-acid chain: Carbonyl reductase [NADPH] 1 (277 aa).

NADP(+) contacts are provided by residues 10–34, 63–64, and asparagine 90; these read VTGA…GDVL and DI. Position 30 is a phosphoserine (serine 30). Residues 95–97 and glutamine 106 contribute to the glutathione site; that span reads FKM. Serine 140 is a substrate binding site. Glutathione is bound at residue 193-194; sequence AY. Catalysis depends on tyrosine 194, which acts as the Proton acceptor. NADP(+)-binding positions include 194 to 198 and 231 to 233; these read YGVTK and VRT.

The protein belongs to the short-chain dehydrogenases/reductases (SDR) family. In terms of assembly, monomer. Present in liver and kidney.

It localises to the cytoplasm. It carries out the reaction a secondary alcohol + NADP(+) = a ketone + NADPH + H(+). The catalysed reaction is prostaglandin F2alpha + NADP(+) = prostaglandin E2 + NADPH + H(+). The enzyme catalyses prostaglandin E1 + NADP(+) = 15-oxoprostaglandin E1 + NADPH + H(+). It catalyses the reaction menadione + NADPH + H(+) = menadiol + NADP(+). It carries out the reaction prostaglandin D2 + NADP(+) = 15-oxoprostaglandin D2 + NADPH + H(+). The catalysed reaction is prostaglandin E2 + NADP(+) = 15-oxoprostaglandin E2 + NADPH + H(+). The enzyme catalyses prostaglandin F2alpha + NADP(+) = 15-oxoprostaglandin F2alpha + NADPH + H(+). It catalyses the reaction daunorubicin + NADPH + H(+) = 13-dihydrodaunorubicin + NADP(+). It carries out the reaction S-nitrosoglutathione + NADPH + H(+) = S-(hydroxysulfenamide)glutathione + NADP(+). The catalysed reaction is a primary alcohol + NADP(+) = an aldehyde + NADPH + H(+). The enzyme catalyses cortisol + NADPH + H(+) = 20beta-dihydrocortisol + NADP(+). It catalyses the reaction corticosterone + NADPH + H(+) = 20beta-dihydrocorticosterone + NADP(+). NADPH-dependent reductase with broad substrate specificity. Catalyzes the reduction of a wide variety of carbonyl compounds including quinones, prostaglandins, menadione, plus various xenobiotics. Catalyzes the reduction of the antitumor anthracyclines doxorubicin and daunorubicin to the cardiotoxic compounds doxorubicinol and daunorubicinol. Can convert prostaglandin E to prostaglandin F2-alpha. Can bind glutathione, which explains its higher affinity for glutathione-conjugated substrates. Catalyzes the reduction of S-nitrosoglutathione. In addition, participates in the glucocorticoid metabolism by catalyzing the NADPH-dependent cortisol/corticosterone into 20beta-dihydrocortisol (20b-DHF) or 20beta-corticosterone (20b-DHB), which are weak agonists of NR3C1 and NR3C2 in adipose tissue. The chain is Carbonyl reductase [NADPH] 1 from Oryctolagus cuniculus (Rabbit).